The primary structure comprises 276 residues: Palmitoyltransferase ZDHHC22 (276 aa).

At 1 to 9 the chain is on the cytoplasmic side; it reads MGKLKLLNT. The helical transmembrane segment at 10–30 threads the bilayer; it reads IAPAYFYAATVVTFALHFLLF. At 31 to 45 the chain is on the lumenal side; it reads TPTIFQSSDVTINPA. A helical membrane pass occupies residues 46 to 66; it reads MLAHISIFLFLMGNALGNYIM. The Cytoplasmic segment spans residues 67-131; sequence TIRNPSESAN…NCIGNRNMRY (65 aa). Residues 101–137 form the DHHC domain; sequence HFCKVCKKVILKRDHHCFFTGNCIGNRNMRYFIMFSI. The active-site S-palmitoyl cysteine intermediate is the Cys-117. Residues 132-152 form a helical membrane-spanning segment; it reads FIMFSIYTSSSCLYSLVIGVA. Residues 153-165 lie on the Lumenal side of the membrane; sequence YLTIEYSISFENP. The helical transmembrane segment at 166–186 threads the bilayer; it reads LTFLTLLPLSTGYFFLGLISG. The Cytoplasmic segment spans residues 187 to 188; it reads LQ. Residues 189-209 traverse the membrane as a helical segment; that stretch reads FFLVIMLYIWLGIGLVSVGFC. The Lumenal segment spans residues 210–276; the sequence is CQQLLLVARG…WQVYHDHKHD (67 aa).

Belongs to the DHHC palmitoyltransferase family.

It localises to the endoplasmic reticulum membrane. Its subcellular location is the golgi apparatus membrane. The catalysed reaction is L-cysteinyl-[protein] + hexadecanoyl-CoA = S-hexadecanoyl-L-cysteinyl-[protein] + CoA. In terms of biological role, palmitoyltransferase that could catalyze the addition of palmitate onto various protein substrates and be involved in a variety of cellular processes. In Danio rerio (Zebrafish), this protein is Palmitoyltransferase ZDHHC22 (zdhhc22).